A 138-amino-acid chain; its full sequence is Transcription antitermination protein NusB (138 aa).

Belongs to the NusB family.

In terms of biological role, involved in transcription antitermination. Required for transcription of ribosomal RNA (rRNA) genes. Binds specifically to the boxA antiterminator sequence of the ribosomal RNA (rrn) operons. The polypeptide is Transcription antitermination protein NusB (Coxiella burnetii (strain Dugway 5J108-111)).